The chain runs to 289 residues: Mitochondrial fission regulator 1-like (289 aa).

Thr27 is modified (phosphothreonine). Phosphoserine is present on residues Ser38, Ser100, Ser107, Ser221, Ser222, Ser235, Ser258, and Ser270.

It belongs to the MTFR1 family. In terms of processing, phosphorylated by AMPK. Upon stress, phosphorylation by AMPK is sufficient to induce mitochondrial fragmentation.

The protein localises to the mitochondrion outer membrane. In terms of biological role, mitochondrial protein required for adaptation of miochondrial dynamics to metabolic changes. Regulates mitochondrial morphology at steady state and mediates AMPK-dependent stress-induced mitochondrial fragmentation via the control of OPA1 levels. The chain is Mitochondrial fission regulator 1-like (MTFR1L) from Bos taurus (Bovine).